We begin with the raw amino-acid sequence, 62 residues long: Photosystem II reaction center protein Z (62 aa).

2 consecutive transmembrane segments (helical) span residues 8–28 and 41–61; these read ALAALVFFSFVMVIGVPFAYA and WVGSGIWTILVIVVAVLNFFV.

It belongs to the PsbZ family. PSII is composed of 1 copy each of membrane proteins PsbA, PsbB, PsbC, PsbD, PsbE, PsbF, PsbH, PsbI, PsbJ, PsbK, PsbL, PsbM, PsbT, PsbX, PsbY, PsbZ, Psb30/Ycf12, peripheral proteins PsbO, CyanoQ (PsbQ), PsbU, PsbV and a large number of cofactors. It forms dimeric complexes.

It localises to the cellular thylakoid membrane. Functionally, may control the interaction of photosystem II (PSII) cores with the light-harvesting antenna, regulates electron flow through the 2 photosystem reaction centers. PSII is a light-driven water plastoquinone oxidoreductase, using light energy to abstract electrons from H(2)O, generating a proton gradient subsequently used for ATP formation. The sequence is that of Photosystem II reaction center protein Z from Gloeothece citriformis (strain PCC 7424) (Cyanothece sp. (strain PCC 7424)).